A 454-amino-acid polypeptide reads, in one-letter code: Inactive tetrahydroanabasine acetyltransferase pauper allele (454 aa).

This sequence belongs to the plant acyltransferase family. As to quaternary structure, monomer.

The chain is Inactive tetrahydroanabasine acetyltransferase pauper allele from Lupinus albus (White lupine).